Consider the following 195-residue polypeptide: Putative C-P lyase subunit protein HtxG (195 aa).

The protein belongs to the PhnH family.

In terms of biological role, belongs to an operon involved in hypophosphite oxidation. Exact function not known. The polypeptide is Putative C-P lyase subunit protein HtxG (htxG) (Stutzerimonas stutzeri (Pseudomonas stutzeri)).